Reading from the N-terminus, the 231-residue chain is Flagellar L-ring protein (231 aa).

A signal peptide spans 1–18; it reads MKHLLSVFALGGAVLLAG. C19 carries the N-palmitoyl cysteine lipid modification. Residue C19 is the site of S-diacylglycerol cysteine attachment.

This sequence belongs to the FlgH family. In terms of assembly, the basal body constitutes a major portion of the flagellar organelle and consists of four rings (L,P,S, and M) mounted on a central rod.

It localises to the cell outer membrane. The protein localises to the bacterial flagellum basal body. Its function is as follows. Assembles around the rod to form the L-ring and probably protects the motor/basal body from shearing forces during rotation. In Pseudomonas entomophila (strain L48), this protein is Flagellar L-ring protein.